Consider the following 465-residue polypeptide: Macrophage metalloelastase (465 aa).

Residues 1-21 (MKFLLVLVLLVSLQVSACGAA) form the signal peptide. Positions 22–101 (PMNESEFAEW…DVQHLRAVPQ (80 aa)) are cleaved as a propeptide — activation peptide. The Cysteine switch signature appears at 86–93 (SRCGVPDV). A Zn(2+)-binding site is contributed by C88. Ca(2+) is bound by residues D120 and D154. Zn(2+) is bound by residues H164 and D166. Residues D171, G172, G174, and T176 each contribute to the Ca(2+) site. H179 contacts Zn(2+). G186 and D190 together coordinate Ca(2+). A Zn(2+)-binding site is contributed by H192. Positions 194, 195, and 197 each coordinate Ca(2+). H214 serves as a coordination point for Zn(2+). E215 is an active-site residue. 2 residues coordinate Zn(2+): H218 and H224. An intrachain disulfide couples C278 to C465. Hemopexin repeat units follow at residues 281-324 (SLSF…WPTI), 325-371 (PSGI…GFPA), 373-421 (VKKI…FPGI), and 422-465 (RPKI…WFGC). D285 serves as a coordination point for Ca(2+). The N-linked (GlcNAc...) asparagine glycan is linked to N313. Ca(2+) is bound by residues D377 and D426.

This sequence belongs to the peptidase M10A family. It depends on Ca(2+) as a cofactor. Zn(2+) is required as a cofactor.

The protein resides in the secreted. Its subcellular location is the extracellular space. It is found in the extracellular matrix. The catalysed reaction is Hydrolysis of soluble and insoluble elastin. Specific cleavages are also produced at 14-Ala-|-Leu-15 and 16-Tyr-|-Leu-17 in the B chain of insulin.. Its function is as follows. May be involved in tissue injury and remodeling. Has significant elastolytic activity. Can accept large and small amino acids at the P1' site, but has a preference for leucine. Aromatic or hydrophobic residues are preferred at the P1 site, with small hydrophobic residues (preferably alanine) occupying P3. The protein is Macrophage metalloelastase (Mmp12) of Rattus norvegicus (Rat).